A 218-amino-acid chain; its full sequence is Small ribosomal subunit protein uS3 (218 aa).

N-acetylmethionine is present on M1. One can recognise a KH type-2 domain in the interval 23–95 (LNELFTREFN…TVVLFAEKIL (73 aa)).

It belongs to the universal ribosomal protein uS3 family.

The protein is Small ribosomal subunit protein uS3 (rps3) of Dictyostelium discoideum (Social amoeba).